A 147-amino-acid chain; its full sequence is Hemoglobin subunit beta (147 aa).

Valine 2 carries the N-acetylvaline modification. The region spanning 3-147 is the Globin domain; the sequence is HLTPEEKSAV…VANALAHKYH (145 aa). Threonine 13 carries the post-translational modification Phosphothreonine. Residue serine 45 is modified to Phosphoserine. N6-acetyllysine is present on lysine 60. Histidine 64 contacts heme b. Residue lysine 83 is modified to N6-acetyllysine. Residue histidine 93 participates in heme b binding. Cysteine 94 is modified (S-nitrosocysteine). Lysine 145 bears the N6-acetyllysine mark.

This sequence belongs to the globin family. As to quaternary structure, heterotetramer of two alpha chains and two beta chains. Red blood cells.

Involved in oxygen transport from the lung to the various peripheral tissues. The protein is Hemoglobin subunit beta (HBB) of Gorilla gorilla gorilla (Western lowland gorilla).